A 140-amino-acid polypeptide reads, in one-letter code: Small ribosomal subunit protein uS19 (140 aa).

This sequence belongs to the universal ribosomal protein uS19 family.

Its function is as follows. Protein S19 forms a complex with S13 that binds strongly to the 16S ribosomal RNA. This Sulfurisphaera tokodaii (strain DSM 16993 / JCM 10545 / NBRC 100140 / 7) (Sulfolobus tokodaii) protein is Small ribosomal subunit protein uS19 (rps19).